A 223-amino-acid polypeptide reads, in one-letter code: Ribosome maturation factor RimM (223 aa).

A compositionally biased stretch (low complexity) spans 1-12; sequence MARRPGSSSRGP. Disordered stretches follow at residues 1 to 44 and 204 to 223; these read MARR…DPGL and ADPPDDLFAPPGPKPADDPG. The 75-residue stretch at 136–210 folds into the PRC barrel domain; it reads EDEFFLTDLI…KVVADPPDDL (75 aa).

It belongs to the RimM family. As to quaternary structure, binds ribosomal protein uS19.

The protein resides in the cytoplasm. Functionally, an accessory protein needed during the final step in the assembly of 30S ribosomal subunit, possibly for assembly of the head region. Essential for efficient processing of 16S rRNA. May be needed both before and after RbfA during the maturation of 16S rRNA. It has affinity for free ribosomal 30S subunits but not for 70S ribosomes. The sequence is that of Ribosome maturation factor RimM from Methylorubrum extorquens (strain PA1) (Methylobacterium extorquens).